Consider the following 483-residue polypeptide: Glutamate--tRNA ligase (483 aa).

The 'HIGH' region signature appears at 11–21; sequence PSPTGHLHIGN. Residues cysteine 108, cysteine 110, histidine 135, and aspartate 137 each contribute to the Zn(2+) site. The 'KMSKS' region signature appears at 252–256; the sequence is KLSKR. Lysine 255 serves as a coordination point for ATP.

This sequence belongs to the class-I aminoacyl-tRNA synthetase family. Glutamate--tRNA ligase type 1 subfamily. Monomer. Zn(2+) serves as cofactor.

The protein resides in the cytoplasm. The catalysed reaction is tRNA(Glu) + L-glutamate + ATP = L-glutamyl-tRNA(Glu) + AMP + diphosphate. Functionally, catalyzes the attachment of glutamate to tRNA(Glu) in a two-step reaction: glutamate is first activated by ATP to form Glu-AMP and then transferred to the acceptor end of tRNA(Glu). The polypeptide is Glutamate--tRNA ligase (Bacillus subtilis (strain 168)).